The sequence spans 694 residues: Elongation factor G 2 (694 aa).

The tr-type G domain maps to 6–282 (SKLRNIGISA…GVVDYLPDPT (277 aa)). Residues 15-22 (AHIDSGKT), 82-86 (DTPGH), and 136-139 (NKCD) each bind GTP.

This sequence belongs to the TRAFAC class translation factor GTPase superfamily. Classic translation factor GTPase family. EF-G/EF-2 subfamily.

It localises to the cytoplasm. Its function is as follows. Catalyzes the GTP-dependent ribosomal translocation step during translation elongation. During this step, the ribosome changes from the pre-translocational (PRE) to the post-translocational (POST) state as the newly formed A-site-bound peptidyl-tRNA and P-site-bound deacylated tRNA move to the P and E sites, respectively. Catalyzes the coordinated movement of the two tRNA molecules, the mRNA and conformational changes in the ribosome. The protein is Elongation factor G 2 of Anaeromyxobacter dehalogenans (strain 2CP-C).